The sequence spans 163 residues: Phosphopantetheine adenylyltransferase (163 aa).

T10 serves as a coordination point for substrate. ATP-binding positions include T10–F11 and H18. Substrate contacts are provided by K42, L74, and R88. ATP is bound by residues G89 to R91, E99, and N124 to T130.

Belongs to the bacterial CoaD family. As to quaternary structure, homohexamer. The cofactor is Mg(2+).

Its subcellular location is the cytoplasm. The catalysed reaction is (R)-4'-phosphopantetheine + ATP + H(+) = 3'-dephospho-CoA + diphosphate. It functions in the pathway cofactor biosynthesis; coenzyme A biosynthesis; CoA from (R)-pantothenate: step 4/5. Reversibly transfers an adenylyl group from ATP to 4'-phosphopantetheine, yielding dephospho-CoA (dPCoA) and pyrophosphate. The chain is Phosphopantetheine adenylyltransferase from Shewanella baltica (strain OS195).